The primary structure comprises 424 residues: UPF0229 protein PputGB1_0427 (424 aa).

Positions 81-107 (EFTAGEHIPRPQGGGGGGGGRGKAGNS) are disordered. Residues 92 to 107 (QGGGGGGGGRGKAGNS) are compositionally biased toward gly residues.

The protein belongs to the UPF0229 family.

In Pseudomonas putida (strain GB-1), this protein is UPF0229 protein PputGB1_0427.